The chain runs to 148 residues: MPDMTSASSGTVLAFDFGKRRIGVAIGEHELRMAHPLTTIDQSMTRPRFEKIAELIEAWQPVLLVVGLSVHADGTEHEITRLCRRFARRLEGRFRIPVALADERYTTVIARSVLEEVGVTGKKQRPMLDQIAAQHILQTYFDLSHAAS.

It belongs to the YqgF nuclease family.

It is found in the cytoplasm. Functionally, could be a nuclease involved in processing of the 5'-end of pre-16S rRNA. In Nitrosomonas europaea (strain ATCC 19718 / CIP 103999 / KCTC 2705 / NBRC 14298), this protein is Putative pre-16S rRNA nuclease.